The following is a 520-amino-acid chain: Leucine aminopeptidase 1 (520 aa).

Mn(2+) contacts are provided by Lys288 and Asp293. Lys300 is an active-site residue. Residues Asp313, Asp373, and Glu375 each coordinate Mn(2+). Arg377 is an active-site residue.

Belongs to the peptidase M17 family. In terms of assembly, homohexamer (dimer of homotrimers). It depends on Mn(2+) as a cofactor.

The protein resides in the cytoplasm. The catalysed reaction is Release of an N-terminal amino acid, Xaa-|-Yaa-, in which Xaa is preferably Leu, but may be other amino acids including Pro although not Arg or Lys, and Yaa may be Pro. Amino acid amides and methyl esters are also readily hydrolyzed, but rates on arylamides are exceedingly low.. The enzyme catalyses Release of N-terminal proline from a peptide.. Presumably involved in the processing and regular turnover of intracellular proteins. Catalyzes the removal of unsubstituted N-terminal amino acids from various peptides. Possesses leucine aminopeptidase activity against the model substrate leucine-amido methyl coumarin. Possesses Cys-Gly dipeptidase activity. In addition, can cleave Cys-Leu and Leu-Cys dipeptides. Functionally, functions as a molecular chaperone to protect proteins from heat-induced damage. This is Leucine aminopeptidase 1 from Arabidopsis thaliana (Mouse-ear cress).